The chain runs to 77 residues: Large ribosomal subunit protein bL31 (77 aa).

Residues Cys16, Cys18, Cys37, and Cys40 each coordinate Zn(2+).

It belongs to the bacterial ribosomal protein bL31 family. Type A subfamily. Part of the 50S ribosomal subunit. Zn(2+) serves as cofactor.

Binds the 23S rRNA. The protein is Large ribosomal subunit protein bL31 of Pseudomonas fluorescens (strain SBW25).